The sequence spans 563 residues: DEAD-box ATP-dependent RNA helicase 25 (563 aa).

The segment at 21 to 57 (KKLTSDEDGSGKLVKDNNKSLKRGREGKSDVDEPLIK) is disordered. Positions 23-56 (LTSDEDGSGKLVKDNNKSLKRGREGKSDVDEPLI) are enriched in basic and acidic residues. Ser-25 carries the phosphoserine modification. Positions 80–108 (TRFDQFPLSPLTLKGIEDAGFKTMTVVQE) match the Q motif motif. The 184-residue stretch at 111–294 (LPLILQGKDI…HVALKRDHEF (184 aa)) folds into the Helicase ATP-binding domain. 124–131 (AKTGTGKT) contributes to the ATP binding site. Positions 242–245 (DEAD) match the DEAD box motif. The region spanning 328-479 (LLKKHITDNV…AVKKVQKGLI (152 aa)) is the Helicase C-terminal domain.

Belongs to the DEAD box helicase family.

The catalysed reaction is ATP + H2O = ADP + phosphate + H(+). The chain is DEAD-box ATP-dependent RNA helicase 25 (RH25) from Arabidopsis thaliana (Mouse-ear cress).